A 184-amino-acid polypeptide reads, in one-letter code: uncharacterized protein (184 aa).

The protein belongs to the PhzF family.

The protein resides in the cytoplasm. Its subcellular location is the nucleus. This is an uncharacterized protein from Schizosaccharomyces pombe (strain 972 / ATCC 24843) (Fission yeast).